The primary structure comprises 487 residues: Fibroblast growth factor receptor-like 1 (487 aa).

The first 18 residues, 1–18, serve as a signal peptide directing secretion; it reads MGLQLALLLAGIVALSDS. At 19–371 the chain is on the extracellular side; sequence ARGPPRIADK…PSSVSSLPWP (353 aa). The Ig-like C2-type 1 domain maps to 23 to 109; it reads PRIADKVIHR…GSTNVNYTLI (87 aa). A disulfide bond links Cys-45 and Cys-93. The N-linked (GlcNAc...) asparagine glycan is linked to Asn-105. Positions 115-125 are enriched in polar residues; the sequence is SSGKNSQTPEG. The segment at 115-147 is disordered; sequence SSGKNSQTPEGSNGEYEDHSGKQWAQPRFTQPA. Ig-like C2-type domains follow at residues 141–231 and 240–348; these read PRFT…YKVE and PILT…AFLT. Cys-166 and Cys-215 are disulfide-bonded. Asn-225, Asn-249, and Asn-287 each carry an N-linked (GlcNAc...) asparagine glycan. A disulfide bond links Cys-262 and Cys-332. The helical transmembrane segment at 372 to 392 threads the bilayer; sequence VIIGIPAGAVFIFGTILLWLC. At 393-487 the chain is on the cytoplasmic side; it reads QTKKKPCSPP…HQHQHIQYQC (95 aa).

Interacts with heparin and FGF2. In terms of tissue distribution, expressed in cartilaginous structures.

The protein localises to the cell membrane. In terms of biological role, has a negative effect on cell proliferation. In Gallus gallus (Chicken), this protein is Fibroblast growth factor receptor-like 1 (FGFRL1).